Reading from the N-terminus, the 688-residue chain is SRSF protein kinase 2 (688 aa).

The disordered stretch occupies residues 1–65; sequence MSVNSEKSSS…EQEDPADYCK (65 aa). A compositionally biased stretch (pro residues) spans 22 to 43; it reads LVPPPPPPPPPPPPPLPDPTPP. A compositionally biased stretch (acidic residues) spans 44–61; that stretch reads EPEEEILGSDDEEQEDPA. S52 is subject to Phosphoserine. The Protein kinase domain occupies 81 to 684; that stretch reads YHVIRKLGWG…ASAGECLRHP (604 aa). ATP contacts are provided by residues 87-95 and K110; that span reads LGWGHFSTV. D214 (proton acceptor) is an active-site residue. Disordered stretches follow at residues 239–277, 329–444, and 469–501; these read WQKAGAPPPSGSAVSTAPQQKPIGKISKNKKKKLKKKQK, GLEE…GRHK, and SVLSEGSPLTEQEESSPSHDRSRTVSASSTGDL. Residues 265–277 are compositionally biased toward basic residues; sequence SKNKKKKLKKKQK. S380 carries the post-translational modification Phosphoserine. Residues 397–421 are compositionally biased toward acidic residues; that stretch reads QLDDEDDDEEDCPNPEEYNLDEPNA. Polar residues predominate over residues 423-433; it reads SDYTYSSSYEQ. S475 is modified (phosphoserine). T478 bears the Phosphothreonine mark. S484, S486, and S490 each carry phosphoserine. Phosphothreonine; by PKB/AKT1 is present on T492. 2 positions are modified to phosphoserine: S494 and S497. A Phosphoserine; by CK2 modification is found at S588.

This sequence belongs to the protein kinase superfamily. CMGC Ser/Thr protein kinase family. As to quaternary structure, associates with U4/U6-U5 tri-small nuclear ribonucleoproteins (U4/U6-U5 tri-snRNPs). Interacts with PKB/AKT1 in a phosphorylation-dependent manner. The phosphorylated form (by PKB/AKT1) interacts with YWHAB and YWHAE. Interaction with YWHAB suppresses its cleavage by caspases and inhibits the release of its N-terminal pro-apoptotic fragment. Interacts with SFN. Interacts with ACIN1. Interacts with POLR2A/RNA polymerase II; the interaction occurs during the co-transcriptional formation of inappropriate R-loops. Mg(2+) is required as a cofactor. Phosphorylation at Thr-492 by PKB/AKT1 enhances its stimulatory activity in triggering cyclin-D1 (CCND1) expression and promoting apoptosis in neurons, which can be blocked by YWHAB. It also enhances its protein kinase activity toward ACIN1 and SRSF2, promotes its nuclear translocation and prevents its proteolytic cleavage. Post-translationally, proteolytically cleaved at Asp-139 and Asp-403 by caspase-3 during apoptotic cell death. Cleavage at Asp-139 which is the major site of cleavage, produces a small N-terminal fragment that translocates into nucleus and promotes VP16-induced apoptosis. Highly expressed in brain, moderately expressed in heart and skeletal muscle and at low levels in lung, liver, and kidney.

It is found in the cytoplasm. Its subcellular location is the nucleus. The protein resides in the nucleoplasm. It localises to the nucleus speckle. The protein localises to the chromosome. The enzyme catalyses L-seryl-[protein] + ATP = O-phospho-L-seryl-[protein] + ADP + H(+). It carries out the reaction L-threonyl-[protein] + ATP = O-phospho-L-threonyl-[protein] + ADP + H(+). Activated by phosphorylation on Ser-52 and Ser-588. Functionally, serine/arginine-rich protein-specific kinase which specifically phosphorylates its substrates at serine residues located in regions rich in arginine/serine dipeptides, known as RS domains and is involved in the phosphorylation of SR splicing factors and the regulation of splicing. Promotes neuronal apoptosis by up-regulating cyclin-D1 (CCND1) expression. This is done by the phosphorylation of SRSF2, leading to the suppression of p53/TP53 phosphorylation thereby relieving the repressive effect of p53/TP53 on cyclin-D1 (CCND1) expression. Phosphorylates ACIN1, and redistributes it from the nuclear speckles to the nucleoplasm, resulting in cyclin A1 but not cyclin A2 up-regulation. Plays an essential role in spliceosomal B complex formation via the phosphorylation of DDX23/PRP28. Probably by phosphorylating DDX23, leads to the suppression of incorrect R-loops formed during transcription; R-loops are composed of a DNA:RNA hybrid and the associated non-template single-stranded DNA. Can mediate hepatitis B virus (HBV) core protein phosphorylation. Plays a negative role in the regulation of HBV replication through a mechanism not involving the phosphorylation of the core protein but by reducing the packaging efficiency of the pregenomic RNA (pgRNA) without affecting the formation of the viral core particles. The chain is SRSF protein kinase 2 from Homo sapiens (Human).